Here is a 202-residue protein sequence, read N- to C-terminus: NADH dehydrogenase [ubiquinone] iron-sulfur protein 7, mitochondrial (202 aa).

Residues 1–56 (MLRRTSFNFTGRAMISRGSPEWSHRLDLKKGKKTTMMHKLGTSKPNNALQYAQMTL) constitute a mitochondrion transit peptide. Residues Cys77, Cys78, Cys142, and Cys172 each coordinate [4Fe-4S] cluster.

Belongs to the complex I 20 kDa subunit family. As to quaternary structure, complex I is composed of 45 different subunits This is a component of the iron-sulfur (IP) fragment of the enzyme. It depends on [4Fe-4S] cluster as a cofactor.

It localises to the mitochondrion. The enzyme catalyses a ubiquinone + NADH + 5 H(+)(in) = a ubiquinol + NAD(+) + 4 H(+)(out). Functionally, core subunit of the mitochondrial membrane respiratory chain NADH dehydrogenase (Complex I) that is believed to belong to the minimal assembly required for catalysis. Complex I functions in the transfer of electrons from NADH to the respiratory chain. The immediate electron acceptor for the enzyme is believed to be ubiquinone. This Trypanosoma brucei brucei protein is NADH dehydrogenase [ubiquinone] iron-sulfur protein 7, mitochondrial (NDHK).